Consider the following 235-residue polypeptide: Large ribosomal subunit protein uL1 (235 aa).

It belongs to the universal ribosomal protein uL1 family. Part of the 50S ribosomal subunit.

In terms of biological role, binds directly to 23S rRNA. The L1 stalk is quite mobile in the ribosome, and is involved in E site tRNA release. Its function is as follows. Protein L1 is also a translational repressor protein, it controls the translation of the L11 operon by binding to its mRNA. The polypeptide is Large ribosomal subunit protein uL1 (Synechococcus sp. (strain WH7803)).